A 194-amino-acid polypeptide reads, in one-letter code: Peptidyl-tRNA hydrolase (194 aa).

Residue Tyr17 coordinates tRNA. Catalysis depends on His22, which acts as the Proton acceptor. Residues Tyr68, Asn70, and Asn116 each contribute to the tRNA site.

The protein belongs to the PTH family. Monomer.

Its subcellular location is the cytoplasm. The catalysed reaction is an N-acyl-L-alpha-aminoacyl-tRNA + H2O = an N-acyl-L-amino acid + a tRNA + H(+). Hydrolyzes ribosome-free peptidyl-tRNAs (with 1 or more amino acids incorporated), which drop off the ribosome during protein synthesis, or as a result of ribosome stalling. Functionally, catalyzes the release of premature peptidyl moieties from peptidyl-tRNA molecules trapped in stalled 50S ribosomal subunits, and thus maintains levels of free tRNAs and 50S ribosomes. This is Peptidyl-tRNA hydrolase from Pseudomonas aeruginosa (strain LESB58).